Reading from the N-terminus, the 383-residue chain is ATP phosphoribosyltransferase regulatory subunit (383 aa).

It belongs to the class-II aminoacyl-tRNA synthetase family. HisZ subfamily. In terms of assembly, heteromultimer composed of HisG and HisZ subunits.

It is found in the cytoplasm. Its pathway is amino-acid biosynthesis; L-histidine biosynthesis; L-histidine from 5-phospho-alpha-D-ribose 1-diphosphate: step 1/9. Functionally, required for the first step of histidine biosynthesis. May allow the feedback regulation of ATP phosphoribosyltransferase activity by histidine. This chain is ATP phosphoribosyltransferase regulatory subunit, found in Cupriavidus pinatubonensis (strain JMP 134 / LMG 1197) (Cupriavidus necator (strain JMP 134)).